A 373-amino-acid chain; its full sequence is Mannitol-1-phosphate 5-dehydrogenase (373 aa).

3–14 (ALHFGAGNIGRG) contributes to the NAD(+) binding site.

The protein belongs to the mannitol dehydrogenase family.

The catalysed reaction is D-mannitol 1-phosphate + NAD(+) = beta-D-fructose 6-phosphate + NADH + H(+). This Bacillus subtilis (strain 168) protein is Mannitol-1-phosphate 5-dehydrogenase (mtlD).